Consider the following 360-residue polypeptide: Protein Wnt-2 (360 aa).

The signal sequence occupies residues 1–25 (MNVPLGGIWLWLPLLLTWLTPEVSS). 11 cysteine pairs are disulfide-bonded: Cys-76-Cys-87, Cys-127-Cys-135, Cys-137-Cys-157, Cys-206-Cys-220, Cys-208-Cys-215, Cys-278-Cys-309, Cys-294-Cys-304, Cys-308-Cys-348, Cys-324-Cys-339, Cys-326-Cys-336, and Cys-331-Cys-332. Ser-212 carries the O-palmitoleoyl serine; by PORCN lipid modification. Asn-295 is a glycosylation site (N-linked (GlcNAc...) asparagine).

Belongs to the Wnt family. In terms of processing, palmitoleoylation is required for efficient binding to frizzled receptors. Depalmitoleoylation leads to Wnt signaling pathway inhibition. In terms of tissue distribution, in embryos in the developing allantois, pericardium heart, and ventral-lateral mesoderm; in adults in lung, brain, heart and placenta.

It localises to the secreted. It is found in the extracellular space. Its subcellular location is the extracellular matrix. In terms of biological role, ligand for members of the frizzled family of seven transmembrane receptors. Functions in the canonical Wnt/beta-catenin signaling pathway. Functions as a upstream regulator of FGF10 expression. Plays an important role in embryonic lung development. May contribute to embryonic brain development by regulating the proliferation of dopaminergic precursors and neurons. This chain is Protein Wnt-2 (Wnt2), found in Mus musculus (Mouse).